The sequence spans 193 residues: Potassium-transporting ATPase KdpC subunit (193 aa).

A helical membrane pass occupies residues Ile14–Ala34.

This sequence belongs to the KdpC family. As to quaternary structure, the system is composed of three essential subunits: KdpA, KdpB and KdpC.

Its subcellular location is the cell membrane. In terms of biological role, part of the high-affinity ATP-driven potassium transport (or Kdp) system, which catalyzes the hydrolysis of ATP coupled with the electrogenic transport of potassium into the cytoplasm. This subunit acts as a catalytic chaperone that increases the ATP-binding affinity of the ATP-hydrolyzing subunit KdpB by the formation of a transient KdpB/KdpC/ATP ternary complex. The polypeptide is Potassium-transporting ATPase KdpC subunit (Bacillus thuringiensis subsp. konkukian (strain 97-27)).